A 201-amino-acid chain; its full sequence is Bradykinin potentiating and C-type natriuretic peptides (201 aa).

A signal peptide spans 1-23 (MFVSRLAASGLLLLALLAVSLDG). A propeptide spanning residues 24–47 (KPVQQWSQNWPGPKVPPLVVQQWS) is cleaved from the precursor. A Pyrrolidone carboxylic acid modification is found at Gln48. A propeptide spanning residues 58–60 (LVV) is cleaved from the precursor. Gln61 is modified (pyrrolidone carboxylic acid). Propeptides lie at residues 67 to 95 (TQLQPRESPAGGTTALREELSLGPDAALD) and 107 to 179 (GSKA…LAKK). The interval 90–172 (PDAALDTPPA…GGGGGGGARR (83 aa)) is disordered. Positions 120-130 (SKGASATSTAS) are enriched in low complexity. The segment covering 132-142 (PMRDLRTDGKQ) has biased composition (basic and acidic residues). The span at 159-170 (PGGGGGGGGGGA) shows a compositional bias: gly residues. Cysteines 185 and 201 form a disulfide.

It in the N-terminal section; belongs to the bradykinin-potentiating peptide family. This sequence in the central section; belongs to the bradykinin inhibitor peptide family. The protein in the C-terminal section; belongs to the natriuretic peptide family. As to expression, venom gland.

The protein resides in the secreted. In terms of biological role, inhibits the activity of the angiotensin-converting enzyme (ACE) by a preferential interaction with its C-domain. May also potentiate the hypotensive effects of bradykinin. Its function is as follows. Antagonizes the vasodilatory actions of bradykinin at the B2 bradykinin receptor. Has a vasorelaxant activity in rat aortic strips and a diuretic potency in anesthetized rats. May act by activating natriuretic receptors (NPR1 and/or NPR2). The protein is Bradykinin potentiating and C-type natriuretic peptides of Sistrurus catenatus edwardsii (Desert massasauga).